The chain runs to 496 residues: Bifunctional protein HldE (496 aa).

The interval 1 to 331 (MDPTPALAEI…AAVHQEEVSA (331 aa)) is ribokinase. 206–209 (NRKE) lines the ATP pocket. D276 is a catalytic residue. Positions 358–496 (FTNGCFDLLH…GGSRRSGDTL (139 aa)) are cytidylyltransferase.

In the N-terminal section; belongs to the carbohydrate kinase PfkB family. This sequence in the C-terminal section; belongs to the cytidylyltransferase family. In terms of assembly, homodimer.

It carries out the reaction D-glycero-beta-D-manno-heptose 7-phosphate + ATP = D-glycero-beta-D-manno-heptose 1,7-bisphosphate + ADP + H(+). It catalyses the reaction D-glycero-beta-D-manno-heptose 1-phosphate + ATP + H(+) = ADP-D-glycero-beta-D-manno-heptose + diphosphate. It functions in the pathway nucleotide-sugar biosynthesis; ADP-L-glycero-beta-D-manno-heptose biosynthesis; ADP-L-glycero-beta-D-manno-heptose from D-glycero-beta-D-manno-heptose 7-phosphate: step 1/4. Its pathway is nucleotide-sugar biosynthesis; ADP-L-glycero-beta-D-manno-heptose biosynthesis; ADP-L-glycero-beta-D-manno-heptose from D-glycero-beta-D-manno-heptose 7-phosphate: step 3/4. Catalyzes the phosphorylation of D-glycero-D-manno-heptose 7-phosphate at the C-1 position to selectively form D-glycero-beta-D-manno-heptose-1,7-bisphosphate. In terms of biological role, catalyzes the ADP transfer from ATP to D-glycero-beta-D-manno-heptose 1-phosphate, yielding ADP-D-glycero-beta-D-manno-heptose. In Rhodospirillum rubrum (strain ATCC 11170 / ATH 1.1.1 / DSM 467 / LMG 4362 / NCIMB 8255 / S1), this protein is Bifunctional protein HldE.